We begin with the raw amino-acid sequence, 208 residues long: Guanylate kinase (208 aa).

The 178-residue stretch at 4–181 folds into the Guanylate kinase-like domain; it reads GLLIVISGPS…AVEKIQSIIS (178 aa). 11 to 18 contacts ATP; sequence GPSGTGKG.

It belongs to the guanylate kinase family.

It is found in the cytoplasm. The catalysed reaction is GMP + ATP = GDP + ADP. Essential for recycling GMP and indirectly, cGMP. The polypeptide is Guanylate kinase (Clostridium tetani (strain Massachusetts / E88)).